The chain runs to 141 residues: Galactose-6-phosphate isomerase subunit LacA (141 aa).

It belongs to the LacAB/RpiB family. Heteromultimeric protein consisting of LacA and LacB.

The enzyme catalyses aldehydo-D-galactose 6-phosphate = keto-D-tagatose 6-phosphate. Its pathway is carbohydrate metabolism; D-galactose 6-phosphate degradation; D-tagatose 6-phosphate from D-galactose 6-phosphate: step 1/1. This Streptococcus pneumoniae (strain ATCC 700669 / Spain 23F-1) protein is Galactose-6-phosphate isomerase subunit LacA.